A 360-amino-acid chain; its full sequence is DNA replication and repair protein RecF (360 aa).

33–40 is an ATP binding site; that stretch reads GENGSGKT.

The protein belongs to the RecF family.

The protein resides in the cytoplasm. Functionally, the RecF protein is involved in DNA metabolism; it is required for DNA replication and normal SOS inducibility. RecF binds preferentially to single-stranded, linear DNA. It also seems to bind ATP. The sequence is that of DNA replication and repair protein RecF from Rickettsia typhi (strain ATCC VR-144 / Wilmington).